A 318-amino-acid polypeptide reads, in one-letter code: Retinol dehydrogenase 5 (318 aa).

The helical transmembrane segment at Met1 to Ser23 threads the bilayer. At Leu24 to Lys288 the chain is on the lumenal side. Residue Phe32–Leu56 participates in NADP(+) binding. Ser163 provides a ligand contact to substrate. Tyr175 serves as the catalytic Proton acceptor. A helical transmembrane segment spans residues Leu289–Ile309. Residues Leu310 to Ser318 lie on the Cytoplasmic side of the membrane.

The protein belongs to the short-chain dehydrogenases/reductases (SDR) family. Homodimer. Expressed in eye, liver, kidney, brain, intestine, placenta, epididymus and submaxillary gland. In eye, strongly expressed in the retinal pigment epithelium, with lower expression levels detected in the inner segment of the photoreceptor cells and in the outer plexiform layer. In kidney, strong expression detected in the distal tubules and the transitional epithelium in the renal pelvis, with weaker expression detected in the epithelium of the outer stripe of the outer zone of the medulla. In liver, detected in hepatocytes in the centrilobular area. In lung, present in club cells in the epithelium of the bronchiole, in parenchyma and in cartilage surrounding the secondary bronchi. In skin, expressed in epidermis, hair follicles and mast cells in the dermis. Expressed in heart. Not detected in heart. Not detected in lung, spleen, skeletal muscle and testis.

Its subcellular location is the endoplasmic reticulum membrane. It catalyses the reaction 11-cis-retinol + NAD(+) = 11-cis-retinal + NADH + H(+). It carries out the reaction 9-cis-retinol + NAD(+) = 9-cis-retinal + NADH + H(+). The enzyme catalyses 13-cis-retinol + NAD(+) = 13-cis-retinal + NADH + H(+). The catalysed reaction is androsterone + NAD(+) = 5alpha-androstan-3,17-dione + NADH + H(+). It catalyses the reaction 5alpha-androstane-3alpha,17beta-diol + NAD(+) = 17beta-hydroxy-5alpha-androstan-3-one + NADH + H(+). The protein operates within cofactor metabolism; retinol metabolism. Its activity is regulated as follows. Inhibited by 9-cis-, 13-cis- and all-trans-retinoic acids, with the most potent inhibitor being 13-cis-retinoic acid. Weakly inhibited by oleic acid. Functionally, catalyzes the oxidation of cis-isomers of retinol, including 11-cis-, 9-cis-, and 13-cis-retinol in an NAD-dependent manner. Has no activity towards all-trans retinal. Plays a significant role in 11-cis retinol oxidation in the retinal pigment epithelium cells (RPE). Also recognizes steroids (androsterone, androstanediol) as its substrates. The sequence is that of Retinol dehydrogenase 5 from Mus musculus (Mouse).